Here is a 327-residue protein sequence, read N- to C-terminus: MNWLTNVVRPKIRNILRRETPENLWIKCPDTGQLVFYKDVEQNQFVIPGSNYHMRMGAVARLRAIFDNETWYDVALPEVVADPLKFRDERKYADRIKDARTKTGAHDAVRVGFGKLETSPVVVAVQDFDFMGGSLGMAAGEAIIRGMELAVEKHAPFIMFAASGGARMQEGILSLMQMPRTTVAVQMLREAKLPYIVVLTNPTTGGVTASYAMLGDIHIAEPGALIGFAGARVIEQTIREKLPDGFQRAEYLKEHGMVDMVVHRHDLRPTLARLCRLLTKSPALTVTTAVEAPAEAAAKAEPEATTTEQPVAPAPTEPPAQPAAPQA.

The 270-residue stretch at 24-293 folds into the CoA carboxyltransferase N-terminal domain; that stretch reads LWIKCPDTGQ…LTVTTAVEAP (270 aa). Residues 293 to 311 are compositionally biased toward low complexity; the sequence is PAEAAAKAEPEATTTEQPV. A disordered region spans residues 293–327; it reads PAEAAAKAEPEATTTEQPVAPAPTEPPAQPAAPQA. The span at 312 to 327 shows a compositional bias: pro residues; the sequence is APAPTEPPAQPAAPQA.

Belongs to the AccD/PCCB family. Acetyl-CoA carboxylase is a heterohexamer composed of biotin carboxyl carrier protein (AccB), biotin carboxylase (AccC) and two subunits each of ACCase subunit alpha (AccA) and ACCase subunit beta (AccD).

The protein resides in the cytoplasm. It catalyses the reaction N(6)-carboxybiotinyl-L-lysyl-[protein] + acetyl-CoA = N(6)-biotinyl-L-lysyl-[protein] + malonyl-CoA. The protein operates within lipid metabolism; malonyl-CoA biosynthesis; malonyl-CoA from acetyl-CoA: step 1/1. Its function is as follows. Component of the acetyl coenzyme A carboxylase (ACC) complex. Biotin carboxylase (BC) catalyzes the carboxylation of biotin on its carrier protein (BCCP) and then the CO(2) group is transferred by the transcarboxylase to acetyl-CoA to form malonyl-CoA. This Rhodopseudomonas palustris (strain TIE-1) protein is Acetyl-coenzyme A carboxylase carboxyl transferase subunit beta.